The sequence spans 457 residues: Glutamyl-tRNA reductase (457 aa).

Substrate is bound by residues 49–52 (TCNR), Ser109, 114–116 (ETQ), and Gln120. Cys50 acts as the Nucleophile in catalysis. 189-194 (GAGKMG) contributes to the NADP(+) binding site.

It belongs to the glutamyl-tRNA reductase family. In terms of assembly, homodimer.

It catalyses the reaction (S)-4-amino-5-oxopentanoate + tRNA(Glu) + NADP(+) = L-glutamyl-tRNA(Glu) + NADPH + H(+). The protein operates within porphyrin-containing compound metabolism; protoporphyrin-IX biosynthesis; 5-aminolevulinate from L-glutamyl-tRNA(Glu): step 1/2. Catalyzes the NADPH-dependent reduction of glutamyl-tRNA(Glu) to glutamate 1-semialdehyde (GSA). The polypeptide is Glutamyl-tRNA reductase (Oceanobacillus iheyensis (strain DSM 14371 / CIP 107618 / JCM 11309 / KCTC 3954 / HTE831)).